An 874-amino-acid chain; its full sequence is Leucine--tRNA ligase (874 aa).

The 'HIGH' region motif lies at 47 to 57 (PYPSGKLHMGH). Positions 636 to 640 (KMSKS) match the 'KMSKS' region motif. Lys-639 contributes to the ATP binding site.

Belongs to the class-I aminoacyl-tRNA synthetase family.

The protein localises to the cytoplasm. It carries out the reaction tRNA(Leu) + L-leucine + ATP = L-leucyl-tRNA(Leu) + AMP + diphosphate. This chain is Leucine--tRNA ligase, found in Acinetobacter baumannii (strain AB0057).